The following is a 121-amino-acid chain: MAKVNAREARIVRHERLRKKVSGTEARPRLCVFRSIENIYTQVINDNCGSTLVQASTKDAELKAELDGKTKTEQAVVIGNLIAKRSLEAGISEVVFDRGGYKYHGRVKALAEAARSGGLKF.

This sequence belongs to the universal ribosomal protein uL18 family. Part of the 50S ribosomal subunit; part of the 5S rRNA/L5/L18/L25 subcomplex. Contacts the 5S and 23S rRNAs.

In terms of biological role, this is one of the proteins that bind and probably mediate the attachment of the 5S RNA into the large ribosomal subunit, where it forms part of the central protuberance. The protein is Large ribosomal subunit protein uL18 of Dehalococcoides mccartyi (strain ATCC BAA-2266 / KCTC 15142 / 195) (Dehalococcoides ethenogenes (strain 195)).